Consider the following 732-residue polypeptide: MEESSPKSLLDITLLYLSTHLEKFCWERQDGTYCLQDAAIFPQEVADRLLQAMAVQRQLNEVTVGIFRGNQLRLKRACIRKAKISAVAFRKAFCHHKLIELDATGVNADITITDIISGLSSSKWIRENLQCLVLNSLTLSLEDPYERCFSQLSGLRVLSITNVLFYNEDLADVASLPRLESLDISNTSVTDITALVACKDILKSLTMHHLKCLKMTTTQILEVIRELKKLNHLDMSDDKQFTSDIACRLLEQNDILLHLVSLDISGRKHVTDKAVEAFIRHRPQMQFVGLLATEAGYSEFLSGEGCVKVSGEANQTQIAEALRRYSERSFFVREALFHLFSLTHVMDKANPEMLKLVVIGMRNHPTNLPVQLAASACVFNLTKQDLAAGMPVKLLADVTHLLLEAMKHFPNHQQLQKNCLLSLCSDRILQDVPFNRFDAAKLVMQWLCNHEDQNMQRMAVAIISILAAKLSTEQTAQLGAELFIVRQLLQIVRQKTSQNMVDTTLKFTLSALWNLTDESPTTCRHFIENQGLELFMKVLETFPSESSIQQKVLGLLNNIAEVKELHTELMCKDFIDQISKLLHSVEVEVSYFAAGIIAHLVSRGEETWTLSSSMRETLLEQLHSAILSWPTPECEMVAYRSFNPFFPLLACFRTPGVQLWAVWAMQHVCSKNPVRYCSMLIEEGGLVRLHRIRDHMCADPDVLRITITILDNLDRHLKKHGNPPCQKPPFTK.

4 LRR repeats span residues 128–149, 154–177, 178–199, and 209–231; these read NLQC…ERCF, GLRV…ASLP, RLES…VACK, and HLKC…KKLN.

This sequence belongs to the zyg-11 family.

Its function is as follows. Serves as substrate adapter subunit in an E3 ubiquitin ligase complex zyg11-cul2-elongin BC. Targets substrates bearing N-terminal glycine degrons for proteasomal degradation. The polypeptide is Protein zyg-11 homolog (zyg-11) (Xenopus laevis (African clawed frog)).